A 638-amino-acid chain; its full sequence is Chaperone protein HtpG (638 aa).

An a; substrate-binding region spans residues 1-346; sequence MSQQETHGFQ…SNDLPLNVSR (346 aa). Residues 347–563 are b; it reads EILQDNKVTT…EGEMSTQMIK (217 aa). Residues 564-638 form a c region; that stretch reads LMEAAGQAVP…MNEMLLAKLK (75 aa).

This sequence belongs to the heat shock protein 90 family. As to quaternary structure, homodimer.

Its subcellular location is the cytoplasm. Molecular chaperone. Has ATPase activity. The chain is Chaperone protein HtpG from Shewanella sediminis (strain HAW-EB3).